A 46-amino-acid chain; its full sequence is Protein krueppel (46 aa).

C2H2-type zinc fingers lie at residues 1-4 (MRLH), 10-32 (YQCLHCDRHFVQVANLRRHLRVH), and 38-46 (YACEICPSR).

This sequence belongs to the krueppel C2H2-type zinc-finger protein family.

It localises to the nucleus. Its function is as follows. Krueppel is a gap class segmentation protein. The polypeptide is Protein krueppel (Kr) (Pholcus phalangioides (Longbodied cellar spider)).